The sequence spans 275 residues: NH(3)-dependent NAD(+) synthetase (275 aa).

Residue 46-53 coordinates ATP; that stretch reads GISGGQDS. D52 is a Mg(2+) binding site. R140 lines the deamido-NAD(+) pocket. T160 is an ATP binding site. Residue E165 coordinates Mg(2+). Deamido-NAD(+) is bound by residues K173 and D180. ATP-binding residues include K189 and T211. Residue 260 to 261 participates in deamido-NAD(+) binding; it reads HK.

It belongs to the NAD synthetase family. Homodimer.

It carries out the reaction deamido-NAD(+) + NH4(+) + ATP = AMP + diphosphate + NAD(+) + H(+). The protein operates within cofactor biosynthesis; NAD(+) biosynthesis; NAD(+) from deamido-NAD(+) (ammonia route): step 1/1. Its function is as follows. Catalyzes the ATP-dependent amidation of deamido-NAD to form NAD. Uses ammonia as a nitrogen source. The chain is NH(3)-dependent NAD(+) synthetase from Shigella flexneri serotype 5b (strain 8401).